Consider the following 341-residue polypeptide: RNA 3'-terminal phosphate cyclase (341 aa).

ATP contacts are provided by residues glutamine 100 and 283–287 (FLGDQ). The active-site Tele-AMP-histidine intermediate is the histidine 307.

The protein belongs to the RNA 3'-terminal cyclase family. Type 1 subfamily.

It localises to the cytoplasm. The catalysed reaction is a 3'-end 3'-phospho-ribonucleotide-RNA + ATP = a 3'-end 2',3'-cyclophospho-ribonucleotide-RNA + AMP + diphosphate. Functionally, catalyzes the conversion of 3'-phosphate to a 2',3'-cyclic phosphodiester at the end of RNA. The mechanism of action of the enzyme occurs in 3 steps: (A) adenylation of the enzyme by ATP; (B) transfer of adenylate to an RNA-N3'P to produce RNA-N3'PP5'A; (C) and attack of the adjacent 2'-hydroxyl on the 3'-phosphorus in the diester linkage to produce the cyclic end product. The biological role of this enzyme is unknown but it is likely to function in some aspects of cellular RNA processing. In Pyrococcus horikoshii (strain ATCC 700860 / DSM 12428 / JCM 9974 / NBRC 100139 / OT-3), this protein is RNA 3'-terminal phosphate cyclase (rtcA).